Reading from the N-terminus, the 486-residue chain is MFPRETKWNISFAGCGFLGVYHIGVASCLREHAPFLVANATHIYGASAGALTATALVTGACLGEAGANIIEVSKEARKRFLGPLHPSFNLVKTIRGCLLKTLPADCHERANGRLGISLTRVSDGENVIISHFSSKDELIQANVCSTFIPVYCGLIPPTLQGVRYVDGGISDNLPLYELKNTITVSPFSGESDICPQDSSTNIHELRVTNTSIQFNLRNLYRLSKALFPPEPMVLREMCKQGYRDGLRFLRRNGLLNQPNPLLALPPVVPQEEDAEEAAVVEERAGEEDQLQPYRKDRILEHLPARLNEALLEACVEPKDLMTTLSNMLPVRLATAMMVPYTLPLESAVSFTIRLLEWLPDVPEDIRWMKEQTGSICQYLVMRAKRKLGDHLPSRLSEQVELRRAQSLPSVPLSCATYSEALPNWVRNNLSLGDALAKWEECQRQLLLGLFCTNVAFPPDALRMRAPASPTAADPATPQDPPGLPPC.

Residues 1–8 (MFPRETKW) lie on the Cytoplasmic side of the membrane. The chain crosses the membrane as a helical span at residues 9-29 (NISFAGCGFLGVYHIGVASCL). A PNPLA domain is found at 10-179 (ISFAGCGFLG…SDNLPLYELK (170 aa)). A GXGXXG motif is present at residues 14 to 19 (GCGFLG). Residues 30 to 42 (REHAPFLVANATH) are Extracellular-facing. The N-linked (GlcNAc...) asparagine glycan is linked to Asn-39. The chain crosses the membrane as a helical span at residues 43–63 (IYGASAGALTATALVTGACLG). The short motif at 45-49 (GASAG) is the GXSXG element. Ser-47 acts as the Nucleophile in catalysis. Residues 64–137 (EAGANIIEVS…IISHFSSKDE (74 aa)) are Cytoplasmic-facing. Lys-92 is covalently cross-linked (Glycyl lysine isopeptide (Lys-Gly) (interchain with G-Cter in ubiquitin)). The chain crosses the membrane as a helical span at residues 138–158 (LIQANVCSTFIPVYCGLIPPT). The Extracellular segment spans residues 159–331 (LQGVRYVDGG…TTLSNMLPVR (173 aa)). Asp-166 functions as the Proton acceptor in the catalytic mechanism. The short motif at 166-168 (DGG) is the DGA/G element. Residues 332–352 (LATAMMVPYTLPLESAVSFTI) traverse the membrane as a helical segment. The Cytoplasmic portion of the chain corresponds to 353-486 (RLLEWLPDVP…PQDPPGLPPC (134 aa)). Ser-374 bears the Phosphoserine; in vitro mark. Phosphoserine; by PKA occurs at positions 396 and 406. Phosphoserine; in vitro is present on residues Ser-430 and Ser-468. Residues 465–476 (APASPTAADPAT) are compositionally biased toward low complexity. Positions 465 to 486 (APASPTAADPATPQDPPGLPPC) are disordered. A compositionally biased stretch (pro residues) spans 477 to 486 (PQDPPGLPPC).

As to quaternary structure, interacts with ABHD5; this association stimulates PNPLA2 triglyceride hydrolase activity. Interacts with SERPINF1; this interaction stimulates the phospholipase A2 activity of PNPLA2. Despite a colocalization in lipid droplets, it probably does not interact with PLIN. Interacts with PLIN5; prevents interaction with ABHD5. Interacts with FAF2. Phosphorylation at Ser-406 by PKA is increased during fasting and moderate intensity exercise, and moderately increases lipolytic activity. Post-translationally, ubiquitinated by PEX2 in response to reactive oxygen species (ROS), leading to its degradation. Ubiquitination is stimulated by LDAH. As to expression, expressed at high levels in white and brown adipose tissue, and to a lesser degree in testis and cardiac muscle. Barely detected in liver, spleen, thymus, kidney, skeletal muscle, and brain. Among the white adipose depots, gonadal fat showed the highest level of expression compared with inguinal and renal white adipose tissues.

It localises to the lipid droplet. The protein localises to the cell membrane. The protein resides in the cytoplasm. It catalyses the reaction a triacylglycerol + H2O = a diacylglycerol + a fatty acid + H(+). The catalysed reaction is a triacylglycerol + H2O = a 1,2-diacylglycerol + a fatty acid + H(+). It carries out the reaction a triacylglycerol + H2O = a 1,3-diacylglycerol + a fatty acid + H(+). The enzyme catalyses a triacyl-sn-glycerol + H2O = a 2,3-diacyl-sn-glycerol + a fatty acid + H(+). It catalyses the reaction a triacyl-sn-glycerol + H2O = a 1,3-diacyl-sn-glycerol + a fatty acid + H(+). The catalysed reaction is 1,2,3-tri-(9Z-octadecenoyl)-glycerol + H2O = 1,3-di-(9Z-octadecenoyl)-glycerol + (9Z)-octadecenoate + H(+). It carries out the reaction 1,2,3-tri-(9Z)-hexadecenoylglycerol + H2O = 1,3-di-(9Z)-hexadecenoylglycerol + (9Z)-hexadecenoate + H(+). The enzyme catalyses 1,2,3-tri-(9Z,12Z)-octadecadienoylglycerol + H2O = 1,3-di-(9Z,12Z)-octadecadienoylglycerol + (9Z,12Z)-octadecadienoate + H(+). It catalyses the reaction 1,2,3-tri-(9Z,12Z,15Z)-octadecatrienoylglycerol + H2O = 1,3-di-(9Z,12Z,15Z)-octadecatrienoylglycerol + (9Z,12Z,15Z)-octadecatrienoate + H(+). The catalysed reaction is 1,3-di-(9Z)-octadecenoyl-2-hexadecanoylglycerol + H2O = 1,3-di-(9Z-octadecenoyl)-glycerol + hexadecanoate + H(+). It carries out the reaction 1,2-di-(9Z)-octadecenoyl-3-hexadecanoyl-sn-glycerol + H2O = 1-(9Z)-octadecenoyl-3-hexadecanoyl-sn-glycerol + (9Z)-octadecenoate + H(+). The enzyme catalyses 1-hexadecanoyl-2,3-di-(9Z)-octadecenoyl-sn-glycerol + H2O = 1-hexadecanoyl-3-(9Z)-octadecenoyl-sn-glycerol + (9Z)-octadecenoate + H(+). It catalyses the reaction 1,2,3-tri-(9Z-octadecenoyl)-glycerol + H2O = 2,3-di-(9Z)-octadecenoyl-sn-glycerol + (9Z)-octadecenoate + H(+). The catalysed reaction is 1,2,3-tri-(9Z)-hexadecenoylglycerol + H2O = 2,3-di-(9Z)-hexadecenoyl-sn-glycerol + (9Z)-hexadecenoate + H(+). It carries out the reaction 1,2,3-tri-(9Z,12Z)-octadecadienoylglycerol + H2O = 2,3-di-(9Z,12Z)-octadecadienoyl-sn-glycerol + (9Z,12Z)-octadecadienoate + H(+). The enzyme catalyses 1,2,3-tri-(9Z,12Z,15Z)-octadecatrienoylglycerol + H2O = 2,3-di-(9Z,12Z,15Z)-octadecatrienoyl-sn-glycerol + (9Z,12Z,15Z)-octadecatrienoate + H(+). It catalyses the reaction 1,3-di-(9Z)-octadecenoyl-2-hexadecanoylglycerol + H2O = 2-hexadecanoyl-3-(9Z)-octadecenoyl-sn-glycerol + (9Z)-octadecenoate + H(+). The catalysed reaction is 1-hexadecanoyl-2,3-di-(9Z)-octadecenoyl-sn-glycerol + H2O = 2,3-di-(9Z)-octadecenoyl-sn-glycerol + hexadecanoate + H(+). It carries out the reaction 1,2-di-(9Z)-octadecenoyl-3-hexadecanoyl-sn-glycerol + H2O = 2-(9Z-octadecenoyl)-3-hexadecanoyl-sn-glycerol + (9Z)-octadecenoate + H(+). The enzyme catalyses 1,2-di-(9Z-octadecenoyl)-glycerol + (9Z)-octadecenoate + H(+) = 1,2,3-tri-(9Z-octadecenoyl)-glycerol + H2O. It catalyses the reaction a 1-acylglycerol + a 1,3-diacylglycerol = a triacylglycerol + glycerol. The catalysed reaction is a 1-acylglycerol + a 1,2-diacylglycerol = a triacylglycerol + glycerol. It carries out the reaction 2 a 1-acylglycerol = a 1,2-diacylglycerol + glycerol. The enzyme catalyses a triacylglycerol + all-trans-retinol = an all-trans-retinyl ester + a diacylglycerol. It catalyses the reaction 1-(9Z-octadecenoyl)-glycerol + 1,3-di-(9Z-octadecenoyl)-glycerol = 1,2,3-tri-(9Z-octadecenoyl)-glycerol + glycerol. The catalysed reaction is 1-(9Z-octadecenoyl)-glycerol + 1,2-di-(9Z-octadecenoyl)-glycerol = 1,2,3-tri-(9Z-octadecenoyl)-glycerol + glycerol. It carries out the reaction 2 1-(9Z-octadecenoyl)-glycerol = 1,2-di-(9Z-octadecenoyl)-glycerol + glycerol. The enzyme catalyses 1,2,3-tri-(9Z-octadecenoyl)-glycerol + all-trans-retinol = all-trans-retinyl 9Z-octadecenoate + di-(9Z)-octadecenoylglycerol. It catalyses the reaction a 1,2-diacyl-sn-glycero-3-phosphocholine + H2O = a 1-acyl-sn-glycero-3-phosphocholine + a fatty acid + H(+). The catalysed reaction is 1,2,3-tri-(9Z-octadecenoyl)-glycerol + 9-hydroxy-octadecanoate = 9-(9Z-octadecenoyloxy)-octadecanoate + 2,3-di-(9Z)-octadecenoyl-sn-glycerol. It carries out the reaction 1-hexadecanoyl-2,3-di-(9Z)-octadecenoyl-sn-glycerol + 9-hydroxy-octadecanoate = 9-hexadecanoyloxy-octadecanoate + 2,3-di-(9Z)-octadecenoyl-sn-glycerol. The enzyme catalyses 1,2,3-tri-(10Z)-heptadecenoylglycerol + 9-hydroxy-octadecanoate = 2,3-di-(10Z-heptadecenoyl)-sn-glycerol + 9-(10Z-heptadecenoyloxy)-octadecanoate. It catalyses the reaction 1,2,3-tri-(9Z,12Z)-octadecadienoylglycerol + 9-hydroxy-octadecanoate = 2,3-di-(9Z,12Z)-octadecadienoyl-sn-glycerol + 9-(9Z,12Z-octadecadienoyloxy)-octadecanoate. The catalysed reaction is 1,2,3-tri-(9Z)-hexadecenoylglycerol + 9-hydroxy-octadecanoate = 2,3-di-(9Z)-hexadecenoyl-sn-glycerol + 9-(9Z-hexadecenoyloxy)-octadecanoate. It carries out the reaction 9-hydroxy-octadecanoate + 1,2-di-(9Z-octadecenoyl)-sn-glycerol = 9-(9Z-octadecenoyloxy)-octadecanoate + 2-(9Z-octadecenoyl)-glycerol. The enzyme catalyses 1-hexadecanoyl-2,3-di-(9Z)-octadecenoyl-sn-glycerol + 9-hydroxy-octadecanoate = 1-hexadecanoyl-3-(9Z)-octadecenoyl-sn-glycerol + 9-(9Z-octadecenoyloxy)-octadecanoate. It functions in the pathway glycerolipid metabolism; triacylglycerol degradation. Stimulated by PKA-dependent PLIN phosphorylation. Functionally, catalyzes the initial step in triglyceride hydrolysis in adipocyte and non-adipocyte lipid droplets. Exhibits a strong preference for the hydrolysis of long-chain fatty acid esters at the sn-2 position of the glycerol backbone and acts coordinately with LIPE/HLS and DGAT2 within the lipolytic cascade. Also possesses acylglycerol transacylase and phospholipase A2 activities. Transfers fatty acid from triglyceride to retinol, hydrolyzes retinylesters, and generates 1,3-diacylglycerol from triglycerides. Regulates adiposome size and may be involved in the degradation of adiposomes. Catalyzes the formation of an ester bond between hydroxy fatty acids and fatty acids derived from triglycerides or diglycerides to generate fatty acid esters of hydroxy fatty acids (FAHFAs) in adipocytes. Acts antagonistically with LDAH in regulation of cellular lipid stores. Inhibits LDAH-stimulated lipid droplet fusion. May play an important role in energy homeostasis. May play a role in the response of the organism to starvation, enhancing hydrolysis of triglycerides and providing free fatty acids to other tissues to be oxidized in situations of energy depletion. This chain is Patatin-like phospholipase domain-containing protein 2, found in Mus musculus (Mouse).